A 704-amino-acid chain; its full sequence is Acetate--CoA ligase [ADP-forming] (704 aa).

This sequence in the N-terminal section; belongs to the acetate CoA ligase alpha subunit family. In the C-terminal section; belongs to the acetate CoA ligase beta subunit family. In terms of assembly, homodimer.

It carries out the reaction acetate + ATP + CoA = acetyl-CoA + ADP + phosphate. Its function is as follows. Catalyzes the formation of acetate and ATP from acetyl-CoA by using ADP and phosphate. Can also use butyryl-CoA, but not phenylacetyl-CoA. Cannot catalyze the reverse reaction. This is Acetate--CoA ligase [ADP-forming] from Methanocaldococcus jannaschii (strain ATCC 43067 / DSM 2661 / JAL-1 / JCM 10045 / NBRC 100440) (Methanococcus jannaschii).